Consider the following 360-residue polypeptide: Dynein intermediate light chain dil1 (360 aa).

It belongs to the dynein light intermediate chain DYN3 family. The dynein complex consists of at least two heavy chains and a number of intermediate and light chains. Interacts with rga3, sec10, sec16, syp1, rvb2, spbc19c7.04c, spbc2f12.05 and spac3a11.10c. Post-translationally, the N-terminal part is acetylated.

It localises to the cytoplasm. The protein localises to the cytoskeleton. Its function is as follows. Component of the cytoplasmic dynein which acts as a motor for the intracellular retrograde motility of vesicles and organelles along microtubules. Promotes oscillatory nuclear movement and efficient pairing of homologous centromeres during meiotic prophase. The protein is Dynein intermediate light chain dil1 (dil1) of Schizosaccharomyces pombe (strain 972 / ATCC 24843) (Fission yeast).